We begin with the raw amino-acid sequence, 433 residues long: MSVVDILSERGFVEAFTHEQELRDLAAESAVTCYIGFDPTASSLHVGSLVPIMALAHMQRNGHRPIALVGGGTGLVGDPSGKTEMRQLITPETVEANIEGIQRQLSRFIDFDGGKALLVNNADWLTGLEYIPFLRDIGRHFSVNRMIKAESYRMRLESEEGLSFIEFNYMLLQAYDFLKLCGDRDCVLQMGGSDQWGNIVAGIDLVRRVLNRQVYGLTFPLITTSSGAKMGKTAAGAVWLDAERTSPYDYYQYWINTDDQDVARFLSLFTFLPMPEIQEVKRISGADLNSAKAVLAFEATRIAHGTDAAVQAHSDAAVNFGRRDIPQDLLPSSTIPRDAEGTGAAVSGTAPQTEMTMAELSEGIPAFVLFHTVGLADSKGQARRLIQQGGGYVNDRRIESDEYRVSAEDLDDAKIVLRAGKKRYHTIVVRKGA.

An L-tyrosine-binding site is contributed by Tyr34. Positions 39 to 48 (PTASSLHVGS) match the 'HIGH' region motif. L-tyrosine-binding residues include Tyr169 and Gln173. Residues 229-233 (KMGKT) carry the 'KMSKS' region motif. Lys232 is a binding site for ATP. The region spanning 364-432 (IPAFVLFHTV…RYHTIVVRKG (69 aa)) is the S4 RNA-binding domain.

Belongs to the class-I aminoacyl-tRNA synthetase family. TyrS type 1 subfamily. In terms of assembly, homodimer.

It is found in the cytoplasm. It carries out the reaction tRNA(Tyr) + L-tyrosine + ATP = L-tyrosyl-tRNA(Tyr) + AMP + diphosphate + H(+). Its function is as follows. Catalyzes the attachment of tyrosine to tRNA(Tyr) in a two-step reaction: tyrosine is first activated by ATP to form Tyr-AMP and then transferred to the acceptor end of tRNA(Tyr). In Desulfosudis oleivorans (strain DSM 6200 / JCM 39069 / Hxd3) (Desulfococcus oleovorans), this protein is Tyrosine--tRNA ligase.